Reading from the N-terminus, the 128-residue chain is Large ribosomal subunit protein eL22 (128 aa).

Belongs to the eukaryotic ribosomal protein eL22 family. Component of the large ribosomal subunit.

The protein resides in the cytoplasm. Functionally, component of the large ribosomal subunit. The ribosome is a large ribonucleoprotein complex responsible for the synthesis of proteins in the cell. The chain is Large ribosomal subunit protein eL22 (rpl22) from Xenopus tropicalis (Western clawed frog).